Reading from the N-terminus, the 196-residue chain is Endoribonuclease YbeY (196 aa).

3 residues coordinate Zn(2+): His-120, His-124, and His-130.

The protein belongs to the endoribonuclease YbeY family. The cofactor is Zn(2+).

The protein localises to the cytoplasm. Functionally, single strand-specific metallo-endoribonuclease involved in late-stage 70S ribosome quality control and in maturation of the 3' terminus of the 16S rRNA. In Corynebacterium glutamicum (strain R), this protein is Endoribonuclease YbeY.